The chain runs to 788 residues: Multi-functional prenyltransferase ltmE (788 aa).

The substrate site is built by K18 and H51. Position 58 (D58) interacts with Mg(2+). Substrate-binding residues include R67, K151, T152, Q182, N189, and K199. Positions 283-337 are disordered; sequence DTLDGDDLTRPSTITQHEQDDHVDRAAIDAKSDASGSSNKSLTPPETAPTTDTLS. Over residues 299-314 the composition is skewed to basic and acidic residues; that stretch reads HEQDDHVDRAAIDAKS. The span at 316 to 337 shows a compositional bias: polar residues; it reads ASGSSNKSLTPPETAPTTDTLS. Residue 404-405 participates in L-tryptophan binding; the sequence is MA. Substrate-binding residues include R427, R599, K601, Y603, and Y687.

It in the N-terminal section; belongs to the FPP/GGPP synthase family. This sequence in the C-terminal section; belongs to the tryptophan dimethylallyltransferase family. Mg(2+) serves as cofactor.

It participates in secondary metabolite biosynthesis. Functionally, multi-functional prenyltransferase; part of the gene cluster that mediates the biosynthesis of lolitrems, indole-diterpene mycotoxins that are potent tremorgens in mammals, and are synthesized by clavicipitaceous fungal endophytes in association with their grass hosts. The geranylgeranyl diphosphate (GGPP) synthase ltmG is proposed to catalyze the first step in lolitrem biosynthesis. LtmG catalyzes a series of iterative condensations of isopentenyl diphosphate (IPP) with dimethylallyl diphosphate (DMAPP), geranyl diphosphate (GPP), and farnesyl diphosphate (FPP), to form GGPP. GGPP then condenses with indole-3-glycerol phosphate to form 3-geranylgeranylindole, an acyclic intermediate, to be incorporated into paxilline. Either ltmG or ltmC could be responsible for this step, as both are putative prenyl transferases. The FAD-dependent monooxygenase ltmM then catalyzes the epoxidation of the two terminal alkenes of the geranylgeranyl moiety, which is subsequently cyclized by ltmB, to paspaline. The cytochrome P450 monooxygenases ltmQ and ltmP can sequentially oxidize paspaline to terpendole E and terpendole F. Alternatively, ltmP converts paspaline to an intermediate which is oxidized by ltmQ to terpendole F. LtmF, ltmK, ltmE and ltmJ appear to be unique to the epichloe endophytes. The prenyltransferase ltmF is involved in the 27-hydroxyl-O-prenylation. The cytochrome P450 monooxygenase ltmK is required for the oxidative acetal ring formation. The multi-functional prenyltransferase ltmE is required for C20- and C21-prenylations of the indole ring of paspalanes and acts together with the cytochrome P450 monooxygenase ltmJ to yield lolitremanes by multiple oxidations and ring closures. The stereoisomer pairs of lolitriol and lolitrem N or lolitrem B and lolitrem F may be attributed to variations in the way in which ring closure can occur under the action of ltmJ. While the major product of this pathway is lolitrem B, the prenyl transferases and cytochrome P450 monooxygenases identified in this pathway have a remarkable versatility in their regio- and stereo-specificities to generate a diverse range of metabolites that are products of a metabolic grid rather than a linear pathway. The sequence is that of Multi-functional prenyltransferase ltmE from Epichloe festucae var. lolii (Neotyphodium lolii).